A 1142-amino-acid polypeptide reads, in one-letter code: ABC transporter F family member 4 (1142 aa).

The segment at 1 to 564 (MGPKGKKKGQ…EDAFELAKKK (564 aa)) is disordered. 3 stretches are compositionally biased toward low complexity: residues 121–143 (PQPV…QQQQ), 153–166 (PQPV…APQK), and 182–195 (PQPV…APQK). 2 stretches are compositionally biased toward acidic residues: residues 203–212 (SEDEDEEDEV) and 233–244 (EEEEEEEEEEIE). Composition is skewed to basic residues over residues 249–261 (KGGK…KGGK) and 280–290 (KGGKKDKKKGS). Residues 295–306 (EEEEEEEEEEIE) show a composition bias toward acidic residues. The span at 314–328 (NKKDQKKGGKGKHVE) shows a compositional bias: basic and acidic residues. Acidic residues predominate over residues 329–340 (EEEEEEEEEEIE). Basic residues predominate over residues 377–387 (KGGKKDKKKGS). Composition is skewed to acidic residues over residues 392-404 (EEEE…EEIE) and 441-451 (EEEEQEQEEEE). The segment covering 456 to 467 (SKSNKKDKKKGK) has biased composition (basic residues). A compositionally biased stretch (acidic residues) spans 471–480 (EEEEEEEEEE). The span at 485–496 (SKSNKKDKKKGS) shows a compositional bias: basic residues. Positions 501 to 518 (EEEEEEEEEEEEEKEEEE) are enriched in acidic residues. A compositionally biased stretch (basic residues) spans 530–548 (AKKVKKVDKKEKKKEKEKK). ABC transporter domains follow at residues 604–857 (IKFD…RSKE) and 923–1139 (LVFK…DNMV). Residues 636–643 (GRNGIGKS) and 956–963 (GMNGVGKS) each bind ATP.

It belongs to the ABC transporter superfamily.

This is ABC transporter F family member 4 (abcF4) from Dictyostelium discoideum (Social amoeba).